A 64-amino-acid chain; its full sequence is Large ribosomal subunit protein uL29 (64 aa).

It belongs to the universal ribosomal protein uL29 family.

The protein is Large ribosomal subunit protein uL29 of Solidesulfovibrio magneticus (strain ATCC 700980 / DSM 13731 / RS-1) (Desulfovibrio magneticus).